Here is a 1930-residue protein sequence, read N- to C-terminus: Myosin-16 (1930 aa).

Positions 35 to 84 (DIKKSCWVKDEKEGFIAGEIQSEQGDQVTVKTVNNQTVTVKKDDVQQMNP) constitute a Myosin N-terminal SH3-like domain. The 687-residue stretch at 88-774 (YQASDMADMT…ILAKLEDMRD (687 aa)) folds into the Myosin motor domain. 181–188 (GESGAGKT) lines the ATP pocket. 2 actin-binding regions span residues 652-674 (LNKL…VPNE) and 753-767 (KIGH…GILA). The IQ domain maps to 777-806 (LAKIMTMLQCRLRGFLMRIEFKKMLERRIG). Positions 835–1921 (LLNVARQEEE…ALNKLRTRHR (1087 aa)) form a coiled coil. Residues 1116–1137 (EELEAERSMRAKVEKQRSDLSR) are disordered. Residues 1120–1137 (AERSMRAKVEKQRSDLSR) show a composition bias toward basic and acidic residues.

Belongs to the TRAFAC class myosin-kinesin ATPase superfamily. Myosin family.

It is found in the cytoplasm. The protein localises to the myofibril. In terms of biological role, may play a role in masticatory muscles contraction. The protein is Myosin-16 of Canis lupus familiaris (Dog).